The following is a 1427-amino-acid chain: A disintegrin and metalloproteinase with thrombospondin motifs 13 (1427 aa).

The first 29 residues, 1–29 (MHQRHPRARCPPLCVAGILACGFLLGCWG), serve as a signal peptide directing secretion. Positions 30-74 (PSHFQQSCLQALEPQAVSSYLSPGAPLKGRPPSPGFQRQRQRQRR) are excised as a propeptide. The tract at residues 51-70 (SPGAPLKGRPPSPGFQRQRQ) is disordered. Residues 80–286 (LHLELLVAVG…GRARCVWDPP (207 aa)) enclose the Peptidase M12B domain. Glu83 is a Ca(2+) binding site. N-linked (GlcNAc...) asparagine glycans are attached at residues Asn142 and Asn146. Intrachain disulfides connect Cys155–Cys208, Cys202–Cys281, and Cys242–Cys265. Positions 173, 182, 184, 187, and 212 each coordinate Ca(2+). His224 is a Zn(2+) binding site. Residue Glu225 is part of the active site. The Zn(2+) site is built by His228 and His234. Ca(2+)-binding residues include Cys281 and Asp284. The Disintegrin domain occupies 287–383 (RPQPGSAGHP…LVELTPIAAV (97 aa)). Cystine bridges form between Cys311–Cys337, Cys322–Cys347, Cys332–Cys366, and Cys360–Cys371. Positions 384 to 439 (HGRWSSWGPRSPCSRSCGGGVVTRRRQCNNPRPAFGGRACVGADLQAEMCNTQACE) constitute a TSP type-1 1 domain. C-linked (Man) tryptophan glycosylation is present at Trp387. 8 cysteine pairs are disulfide-bonded: Cys396-Cys433, Cys400-Cys438, Cys411-Cys423, Cys450-Cys487, Cys483-Cys522, Cys508-Cys527, Cys532-Cys548, and Cys545-Cys555. Ser399 carries O-linked (Fuc...) serine glycosylation. Positions 440-556 (KTQLEFMSQQ…VCGGDNSTCS (117 aa)) are cysteine-rich. A Cell attachment site motif is present at residues 498–500 (RGD). N-linked (GlcNAc...) asparagine glycosylation is found at Asn552, Asn579, and Asn614. The segment at 556–685 (SPRKGSFTAG…TYFQPKPRQA (130 aa)) is spacer. N-linked (GlcNAc...) (complex) asparagine glycosylation occurs at Asn667. TSP type-1 domains are found at residues 682 to 730 (PRQA…SQQP), 742 to 805 (CPPY…QPCP), 808 to 859 (WEVS…PEPC), 896 to 950 (VWTP…QAVP), 951 to 1011 (CPAR…SLEP), 1012 to 1068 (CPPR…VPCL), and 1072 to 1131 (CTYR…GPCV). Ser698 carries O-linked (Fuc...) serine glycosylation. N-linked (GlcNAc...) (complex) asparagine glycosylation is present at Asn707. The O-linked (Fuc...) serine glycan is linked to Ser757. Asn828 carries N-linked (GlcNAc...) asparagine glycosylation. Residues Ser907, Ser965, Ser1027, and Ser1087 are each glycosylated (O-linked (Fuc...) serine). CUB domains follow at residues 1192–1298 (CGRQ…FYRE) and 1299–1427 (CDMQ…KEGT). Asn1235 and Asn1354 each carry an N-linked (GlcNAc...) asparagine glycan.

The cofactor is Zn(2+). It depends on Ca(2+) as a cofactor. Glycosylated. O-fucosylated by POFUT2 on a serine or a threonine residue found within the consensus sequence C1-X(2)-(S/T)-C2-G of the TSP type-1 repeat domains where C1 and C2 are the first and second cysteine residue of the repeat, respectively. Fucosylated repeats can then be further glycosylated by the addition of a beta-1,3-glucose residue by the glucosyltransferase, B3GALTL. Fucosylation mediates the efficient secretion of ADAMTS13. May also be C-glycosylated on tryptophan residues within the consensus sequence W-X-X-W of the TPRs, and also N-glycosylated. These other glycosylations can also facilitate secretion. In terms of processing, the precursor is processed by a furin endopeptidase which cleaves off the pro-domain. As to expression, plasma. Expressed primarily in liver.

Its subcellular location is the secreted. The catalysed reaction is The enzyme cleaves the von Willebrand factor at bond 842-Tyr-|-Met-843 within the A2 domain.. With respect to regulation, zinc and calcium ions cooperatively modulate enzyme activity. The cleavage of the pro-domain is not required for protease activity. Dependence on calcium for proteolytic activity is mediated by the high affinity site. Functionally, cleaves the vWF multimers in plasma into smaller forms thereby controlling vWF-mediated platelet thrombus formation. This chain is A disintegrin and metalloproteinase with thrombospondin motifs 13 (ADAMTS13), found in Homo sapiens (Human).